Reading from the N-terminus, the 193-residue chain is Flagellin B3 (193 aa).

The propeptide occupies Met-1–Gly-12.

This sequence belongs to the archaeal flagellin family. In terms of processing, glycosylated.

It is found in the archaeal flagellum. Its function is as follows. Flagellin is the subunit protein which polymerizes to form the filaments of archaeal flagella. This Halobacterium salinarum (strain ATCC 700922 / JCM 11081 / NRC-1) (Halobacterium halobium) protein is Flagellin B3 (flaB3).